The chain runs to 278 residues: Nucleotide-binding protein Tbd_0529 (278 aa).

8–15 (GLSGSGKS) provides a ligand contact to ATP. 57 to 60 (DARS) is a binding site for GTP.

It belongs to the RapZ-like family.

Displays ATPase and GTPase activities. This Thiobacillus denitrificans (strain ATCC 25259 / T1) protein is Nucleotide-binding protein Tbd_0529.